The chain runs to 376 residues: 23S rRNA (uracil(747)-C(5))-methyltransferase RlmC (376 aa).

Positions 3, 11, 14, and 87 each coordinate [4Fe-4S] cluster. The S-adenosyl-L-methionine site is built by Q212, F241, E262, and N307. C334 functions as the Nucleophile in the catalytic mechanism.

Belongs to the class I-like SAM-binding methyltransferase superfamily. RNA M5U methyltransferase family. RlmC subfamily.

The catalysed reaction is uridine(747) in 23S rRNA + S-adenosyl-L-methionine = 5-methyluridine(747) in 23S rRNA + S-adenosyl-L-homocysteine + H(+). Its function is as follows. Catalyzes the formation of 5-methyl-uridine at position 747 (m5U747) in 23S rRNA. The protein is 23S rRNA (uracil(747)-C(5))-methyltransferase RlmC of Salmonella choleraesuis (strain SC-B67).